Here is a 222-residue protein sequence, read N- to C-terminus: 2-C-methyl-D-erythritol 4-phosphate cytidylyltransferase (222 aa).

This sequence belongs to the IspD/TarI cytidylyltransferase family. IspD subfamily.

The catalysed reaction is 2-C-methyl-D-erythritol 4-phosphate + CTP + H(+) = 4-CDP-2-C-methyl-D-erythritol + diphosphate. It participates in isoprenoid biosynthesis; isopentenyl diphosphate biosynthesis via DXP pathway; isopentenyl diphosphate from 1-deoxy-D-xylulose 5-phosphate: step 2/6. In terms of biological role, catalyzes the formation of 4-diphosphocytidyl-2-C-methyl-D-erythritol from CTP and 2-C-methyl-D-erythritol 4-phosphate (MEP). The protein is 2-C-methyl-D-erythritol 4-phosphate cytidylyltransferase of Thermotoga petrophila (strain ATCC BAA-488 / DSM 13995 / JCM 10881 / RKU-1).